A 330-amino-acid chain; its full sequence is Succinylglutamate desuccinylase (330 aa).

Zn(2+) is bound by residues histidine 53, glutamate 56, and histidine 147. The active site involves glutamate 210.

Belongs to the AspA/AstE family. Succinylglutamate desuccinylase subfamily. It depends on Zn(2+) as a cofactor.

The catalysed reaction is N-succinyl-L-glutamate + H2O = L-glutamate + succinate. It functions in the pathway amino-acid degradation; L-arginine degradation via AST pathway; L-glutamate and succinate from L-arginine: step 5/5. Functionally, transforms N(2)-succinylglutamate into succinate and glutamate. This Yersinia enterocolitica serotype O:8 / biotype 1B (strain NCTC 13174 / 8081) protein is Succinylglutamate desuccinylase.